We begin with the raw amino-acid sequence, 535 residues long: Portal protein (535 aa).

This sequence belongs to the podoviridae portal protein family. In terms of assembly, homododecamer. Interacts with major capsid protein. Interacts with the tail tube proteins gp11 and gp12. Interacts with the terminase large subunit. Interacts with the internal virion protein gp14.

It is found in the virion. In terms of biological role, forms the portal vertex of the capsid. This portal plays critical roles in head assembly, genome packaging, neck/tail attachment, and genome ejection. The portal protein multimerizes as a single ring-shaped homododecamer arranged around a central channel. This chain is Portal protein (8), found in Enterobacteria phage T3 (Bacteriophage T3).